Consider the following 293-residue polypeptide: AM-toxin biosynthesis protein 14 (293 aa).

The next 5 helical transmembrane spans lie at 33–53 (SATA…EVYI), 73–93 (IAVN…ALVL), 148–168 (GVLA…LCVW), 183–203 (LVPI…LWIL), and 221–241 (VWCL…TPLT).

It is found in the membrane. It functions in the pathway mycotoxin biosynthesis. Its function is as follows. Part of the gene clusters that mediate the biosynthesis of AM-toxins, host-selective toxins (HSTs) causing Alternaria blotch on apple, a worldwide distributed disease. AM-toxins are cyclic depsipeptides containing the 3 residues 2-hydroxy-isovaleric acid (2-HIV), dehydroalanine, L-alanine which are common for all 3 AM-toxins I to III. The fourth precursor is L-alpha-amino-methoxyphenyl-valeric acid (L-Amv) for AM-toxin I, L-alpha-amino-phenyl-valeric acid (L-Apv) for AM-toxin II, and L-alpha-amino-hydroxyphenyl-valeric acid (L-Ahv) for AM-toxin III. AM-toxins have two target sites for affecting susceptible apple cells; they cause invagination of the plasma membrane and electrolyte loss and chloroplast disorganization. The non-ribosomal peptide synthetase AMT1 contains 4 catalytic modules and is responsible for activation of each residue in AM-toxin. The aldo-keto reductase AMT2 catalyzes the conversion of 2-keto-isovaleric acid (2-KIV) to 2-hydroxy-isovaleric acid (2-HIV), one of the precursor residues incorporated by AMT1 during AM-toxin biosynthesis, by reduction of its ketone to an alcohol. The cytochrome P450 monooxygenase AMT3 and the thioesterase AMT4 are also important for AM-toxin production, but their exact function within the AM-toxin biosynthesis are not known yet. Up to 21 proteins (including AMT1 to AMT4) are predicted to be involved in AM-toxin biosynthesis since their expression ishighly up-regulated in AM-toxin-producing cultures. The sequence is that of AM-toxin biosynthesis protein 14 from Alternaria alternata (Alternaria rot fungus).